The following is a 388-amino-acid chain: Diacylglycerol O-acyltransferase 2 (388 aa).

Topologically, residues 1-69 are cytoplasmic; sequence MKTLIAAYSG…NRSKVEKQLQ (69 aa). A helical transmembrane segment spans residues 70 to 88; the sequence is VISVLQWVLSFLVLGVACS. Over 89–92 the chain is Lumenal; that stretch reads VILM. The chain crosses the membrane as a helical span at residues 93-112; it reads YTFCTDCWLIAVLYFTWLAF. Residues 113-388 lie on the Cytoplasmic side of the membrane; sequence DWNTPKKGGR…LPETEVLEVN (276 aa).

The protein belongs to the diacylglycerol acyltransferase family. As to quaternary structure, forms multimeric complexes consisting of several DGAT2 subunits. Interacts with SLC27A1 and this interaction is enhanced in the presence of ZFYVE1. Predominantly expressed in liver. Also expressed in testis.

The protein resides in the endoplasmic reticulum membrane. It is found in the lipid droplet. It localises to the cytoplasm. Its subcellular location is the perinuclear region. The catalysed reaction is an acyl-CoA + a 1,2-diacyl-sn-glycerol = a triacyl-sn-glycerol + CoA. It carries out the reaction all-trans-retinol + an acyl-CoA = an all-trans-retinyl ester + CoA. The enzyme catalyses 1,2-di-(9Z-octadecenoyl)-sn-glycerol + hexadecanoyl-CoA = 1,2-di-(9Z)-octadecenoyl-3-hexadecanoyl-sn-glycerol + CoA. It catalyses the reaction 1,2-di-(9Z-octadecenoyl)-sn-glycerol + (9Z)-octadecenoyl-CoA = 1,2,3-tri-(9Z-octadecenoyl)-glycerol + CoA. The catalysed reaction is 1,3-di-(9Z-octadecenoyl)-glycerol + (9Z)-octadecenoyl-CoA = 1,2,3-tri-(9Z-octadecenoyl)-glycerol + CoA. It carries out the reaction 2,3-di-(9Z)-octadecenoyl-sn-glycerol + (9Z)-octadecenoyl-CoA = 1,2,3-tri-(9Z-octadecenoyl)-glycerol + CoA. The enzyme catalyses 2-(9Z-octadecenoyl)-glycerol + hexadecanoyl-CoA = 1-hexadecanoyl-2-(9Z-octadecenoyl)-sn-glycerol + CoA. It catalyses the reaction 2-(9Z-octadecenoyl)-glycerol + (9Z)-octadecenoyl-CoA = 1,2-di-(9Z-octadecenoyl)-sn-glycerol + CoA. The catalysed reaction is all-trans-retinol + hexadecanoyl-CoA = all-trans-retinyl hexadecanoate + CoA. It carries out the reaction 1-O-(9Z-octadecenyl)-glycerol + (9Z)-octadecenoyl-CoA = 1-O-(9Z-octadecyl)-3-(9Z-octadecenoyl)-glycerol + CoA. The enzyme catalyses 1-(9Z-octadecenoyl)-glycerol + (9Z)-octadecenoyl-CoA = 1,2-di-(9Z-octadecenoyl)-glycerol + CoA. It functions in the pathway glycerolipid metabolism; triacylglycerol biosynthesis. Its activity is regulated as follows. Inhibited by niacin. Essential acyltransferase that catalyzes the terminal and only committed step in triacylglycerol synthesis by using diacylglycerol and fatty acyl CoA as substrates. Required for synthesis and storage of intracellular triglycerides. Probably plays a central role in cytosolic lipid accumulation. In liver, is primarily responsible for incorporating endogenously synthesized fatty acids into triglycerides. Also functions as an acyl-CoA retinol acyltransferase (ARAT). Also able to use 1-monoalkylglycerol (1-MAkG) as an acyl acceptor for the synthesis of monoalkyl-monoacylglycerol (MAMAG). The chain is Diacylglycerol O-acyltransferase 2 from Mus musculus (Mouse).